We begin with the raw amino-acid sequence, 188 residues long: Elongation factor P (188 aa).

N6-(3,6-diaminohexanoyl)-5-hydroxylysine is present on Lys34.

The protein belongs to the elongation factor P family. In terms of processing, may be beta-lysylated on the epsilon-amino group of Lys-34 by the combined action of EpmA and EpmB, and then hydroxylated on the C5 position of the same residue by EpmC (if this protein is present). Lysylation is critical for the stimulatory effect of EF-P on peptide-bond formation. The lysylation moiety may extend toward the peptidyltransferase center and stabilize the terminal 3-CCA end of the tRNA. Hydroxylation of the C5 position on Lys-34 may allow additional potential stabilizing hydrogen-bond interactions with the P-tRNA.

It is found in the cytoplasm. It participates in protein biosynthesis; polypeptide chain elongation. Its function is as follows. Involved in peptide bond synthesis. Alleviates ribosome stalling that occurs when 3 or more consecutive Pro residues or the sequence PPG is present in a protein, possibly by augmenting the peptidyl transferase activity of the ribosome. Modification of Lys-34 is required for alleviation. This is Elongation factor P from Xylella fastidiosa (strain M23).